The following is a 271-amino-acid chain: (+)-cis,trans-nepetalactol synthase NEPS1 (271 aa).

NAD(+) contacts are provided by residues Gly24–Gly30, Asp49–Gln51, Asp72–Val73, and Asn99. Substrate contacts are provided by Thr154 and Tyr167. Residues Tyr167, Lys171, and Val200–Ala205 each bind NAD(+). Tyr167 (proton acceptor) is an active-site residue.

It belongs to the short-chain dehydrogenases/reductases (SDR) family.

It carries out the reaction (S)-8-oxocitronellyl enol = cis-trans-nepetalactol. The enzyme catalyses cis-cis-nepetalactol + NAD(+) = cis-cis-nepetalactone + NADH + H(+). The catalysed reaction is cis-trans-nepetalactol + NAD(+) = cis-trans-nepetalactone + NADH + H(+). In terms of biological role, bifunctional enzyme that possesses cyclase and dehydrogenase activities. Functions as a non-oxidoreductive cyclase to promote the formation of cis-trans-nepetalactol. Functions as dehydrogenase to oxidize cis-cis-nepetalactol and cis-trans-nepetalactol into nepetalactones, metabolites that are both insect-repellent and have euphoric effect in cats. Binds NAD(+) as classical short-chain dehydrogenase/reductase (SDR), but does not utilize it for its redox-neutral cyclase activity. This is (+)-cis,trans-nepetalactol synthase NEPS1 from Nepeta racemosa (Catmint).